A 521-amino-acid chain; its full sequence is Phosphoenolpyruvate carboxykinase (ATP) (521 aa).

Positions 52, 186, and 192 each coordinate substrate. Residues Lys-192, His-211, and 227–235 (GLSGTGKTT) each bind ATP. Residues Lys-192 and His-211 each coordinate Mn(2+). Position 248 (Asp-248) interacts with Mn(2+). ATP-binding positions include Glu-276, Arg-313, 432–433 (RI), and Thr-438. Residue Arg-313 participates in substrate binding.

It belongs to the phosphoenolpyruvate carboxykinase (ATP) family. The cofactor is Mn(2+).

The protein localises to the cytoplasm. It carries out the reaction oxaloacetate + ATP = phosphoenolpyruvate + ADP + CO2. It functions in the pathway carbohydrate biosynthesis; gluconeogenesis. In terms of biological role, involved in the gluconeogenesis. Catalyzes the conversion of oxaloacetate (OAA) to phosphoenolpyruvate (PEP) through direct phosphoryl transfer between the nucleoside triphosphate and OAA. This Caldanaerobacter subterraneus subsp. tengcongensis (strain DSM 15242 / JCM 11007 / NBRC 100824 / MB4) (Thermoanaerobacter tengcongensis) protein is Phosphoenolpyruvate carboxykinase (ATP).